The chain runs to 156 residues: Small ribosomal subunit protein uS7c (156 aa).

It belongs to the universal ribosomal protein uS7 family. Part of the 30S ribosomal subunit.

It localises to the plastid. It is found in the chloroplast. Its function is as follows. One of the primary rRNA binding proteins, it binds directly to 16S rRNA where it nucleates assembly of the head domain of the 30S subunit. This Pyropia yezoensis (Susabi-nori) protein is Small ribosomal subunit protein uS7c (rps7).